Consider the following 490-residue polypeptide: Argininosuccinate lyase (490 aa).

The protein belongs to the lyase 1 family. Argininosuccinate lyase subfamily.

It is found in the cytoplasm. It catalyses the reaction 2-(N(omega)-L-arginino)succinate = fumarate + L-arginine. It functions in the pathway amino-acid biosynthesis; L-arginine biosynthesis; L-arginine from L-ornithine and carbamoyl phosphate: step 3/3. The polypeptide is Argininosuccinate lyase (Bifidobacterium longum (strain DJO10A)).